The primary structure comprises 432 residues: Serine/threonine-protein kinase CDG1 (432 aa).

2 S-palmitoyl cysteine lipidation sites follow: Cys-4 and Cys-6. The span at 15–24 shows a compositional bias: basic residues; that stretch reads LKDKSHKRSI. The interval 15 to 47 is disordered; that stretch reads LKDKSHKRSIRNQTSSSSAQPAGTAKEVDSSSS. Residues 25–35 are compositionally biased toward polar residues; that stretch reads RNQTSSSSAQP. Residues Ser-44 and Ser-47 each carry the phosphoserine modification. Residues 74 to 354 enclose the Protein kinase domain; it reads FRNESLIGRG…SQVVECLKYI (281 aa). ATP is bound by residues 80–88 and Lys-102; that span reads IGRGGFGTV. Tyr-147 carries the post-translational modification Phosphotyrosine. Catalysis depends on Asp-200, which acts as the Proton acceptor. 2 positions are modified to phosphoserine: Ser-204 and Ser-234. Phosphothreonine is present on residues Thr-235 and Thr-240. Position 248 is a phosphotyrosine (Tyr-248).

This sequence belongs to the protein kinase superfamily. Ser/Thr protein kinase family. As to quaternary structure, interacts with BSU1, BSL1 and BRI1. Phosphorylated at Ser-44, Ser-47 and Ser-234 by BRI1. Expressed at high levels in the stamen and pollen grains. Expressed at a very low level in vegetative tissues.

The protein resides in the cell membrane. The enzyme catalyses L-seryl-[protein] + ATP = O-phospho-L-seryl-[protein] + ADP + H(+). The catalysed reaction is L-threonyl-[protein] + ATP = O-phospho-L-threonyl-[protein] + ADP + H(+). Its activity is regulated as follows. Activated by phosphorylation at Ser-234. Its function is as follows. Serine/threonine-protein kinase involved in the positive regulation of brassinosteroid (BR) signaling and plant growth. Mediates BR signal transduction from BRI1 receptor kinase to BSU1 phosphatase. After activation by phosphorylation at Ser-234 by BRI1, CDG1 phosphorylates BSU1 at 'Ser-764' in the phosphatase domain, increasing the ability of BSU1 to inactivate the negative regulator of BR signaling ASK7/BIN2 by dephosphorylation at 'Tyr-200'. The full kinase activity of CDG1 is required for its biological function. This chain is Serine/threonine-protein kinase CDG1, found in Arabidopsis thaliana (Mouse-ear cress).